The chain runs to 992 residues: MWDGPLRSRQNLRTVAKLRSSGCPLTQSAIHPTTTSPSEGETASEILQGQASAGYIEEQQLPATSSQLEMSGDSNAASDNNVVIMTKRQRDDLSQASQAEVLSRLRTEDAQGPAENNGAQSDLALHSCDMEERVDSSKLNLNHVTVNKHSPPASKSAGISQQNDDGGCGASENVDNTTTAASKQRGKLLLDSSSSNCTPKQQAQQAVTQVPEWELSHEQERIFDIVVNHRRSVFLTGGAGTGKSHLLRAIIAALPLSTTFVTATTGLAALNLGGTTLHSFSGCGFVDQHTSTHQMVYRNVLGRKKARANWRKCRVLVVDEVSMLDAWFFDMLEYVARHIRGCRKPFGGIQLVLSGDFLQLPPVNKHSPKQETRLCFEAKSWPRVNPLVCTLSHQFRQKDKEFFSLLNEVRVGALTAPSLGLLSSLSVITTVSFVDEEKLKLKREVGAEAVDIITDSKGRTRRQRQDGFTILRARRSEVDAINTEKFGELDTEIYSYKGAHRGEGHFPSDLPSTVSVRAGCRVMLLANLDLSAGLANGSIGTVESFVSSKLHQTANPSTKDDLQHLADHMMLPVVRFDHKGKQGPGDGGGAAAGRLVVIEPHRWTMRQGDSDVSCSIQIPLQLAYAITIHKSQGMSLSHVNVDFAGIFEEGQAYVALSRCTDVANLVIENFDAQRVNPNIKALAYYRALEFVGTEHREAEKKLIDNGNKMNPWGPYDVEDFEASDDDNGGAVKKEVVENLTYDAENISCMVEQFRQRYMPQYIMFSTLRRRVLSNTEDAARVKGALLVMDTTSLLALTNMTGPTSLYQTIFTERGNMMRVPRVVKEELLFLASTDVKEVSSVTTPTLHSFCSTCSSTPCSTGFSYDFVEVVSCALSIMENAKCDFLLDEQREGEANSLPPVIQEWRSLSPLLMLNSSPDTGEKDAPSVIGFGERSREQHHSTLMFASFLVSRYSGNGAVYVCTETVELAARALAIGLRVCSIAYLCNRARRVN.

The transit peptide at 1 to 21 directs the protein to the mitochondrion; the sequence is MWDGPLRSRQNLRTVAKLRSS. Disordered regions lie at residues 20–43, 145–182, and 190–209; these read SSGC…GETA, TVNK…TAAS, and LDSS…AVTQ. Composition is skewed to polar residues over residues 23-43, 173-182, and 191-208; these read CPLT…GETA, NVDNTTTAAS, and DSSS…QAVT. 237–244 contributes to the ATP binding site; it reads GGAGTGKS. A DNA-binding region spans residues 651 to 670; that stretch reads QAYVALSRCTDVANLVIENF.

It belongs to the helicase family. PIF1 subfamily. In terms of assembly, monomer. Mg(2+) serves as cofactor.

It localises to the mitochondrion matrix. It is found in the kinetoplast. The catalysed reaction is Couples ATP hydrolysis with the unwinding of duplex DNA at the replication fork by translocating in the 5'-3' direction. This creates two antiparallel DNA single strands (ssDNA). The leading ssDNA polymer is the template for DNA polymerase III holoenzyme which synthesizes a continuous strand.. The enzyme catalyses ATP + H2O = ADP + phosphate + H(+). In terms of biological role, DNA-dependent ATPase and 5'-3' DNA helicase required for the maintenance of mitochondrial (kinetoplast) genome stability. This Trypanosoma brucei brucei (strain 927/4 GUTat10.1) protein is ATP-dependent DNA helicase PIF7.